The sequence spans 647 residues: Carotenoid phi-ring synthase (647 aa).

Residues alanine 67, 86 to 87, lysine 94, and tyrosine 120 contribute to the FAD site; that span reads EA. The region spanning 322–416 is the Rieske domain; the sequence is VASIPKREVP…VREAGEMLVI (95 aa). The [2Fe-2S] cluster site is built by cysteine 362, histidine 364, cysteine 380, and histidine 383. Aspartate 601 and methionine 612 together coordinate FAD.

It belongs to the carotenoid/retinoid oxidoreductase family. Requires FAD as cofactor. The cofactor is [2Fe-2S] cluster.

It carries out the reaction a carotenoid beta-end derivative + 2 A = a carotenoid phi-end derivative + 2 AH2. Its pathway is carotenoid biosynthesis. Functionally, involved in the biosynthesis of chlorobactene, a carotenoid with aromatic end group. Catalyzes the introduction of two additional double bonds into the ionone ring of gamma-carotene to produce chlorobactene. The reaction includes an intramolecular methyl transfer from position C1 to position C2 of the ring. The protein is Carotenoid phi-ring synthase of Chlorobaculum tepidum (strain ATCC 49652 / DSM 12025 / NBRC 103806 / TLS) (Chlorobium tepidum).